A 572-amino-acid chain; its full sequence is Proline--tRNA ligase (572 aa).

The protein belongs to the class-II aminoacyl-tRNA synthetase family. ProS type 1 subfamily. Homodimer.

It localises to the cytoplasm. The catalysed reaction is tRNA(Pro) + L-proline + ATP = L-prolyl-tRNA(Pro) + AMP + diphosphate. Functionally, catalyzes the attachment of proline to tRNA(Pro) in a two-step reaction: proline is first activated by ATP to form Pro-AMP and then transferred to the acceptor end of tRNA(Pro). As ProRS can inadvertently accommodate and process non-cognate amino acids such as alanine and cysteine, to avoid such errors it has two additional distinct editing activities against alanine. One activity is designated as 'pretransfer' editing and involves the tRNA(Pro)-independent hydrolysis of activated Ala-AMP. The other activity is designated 'posttransfer' editing and involves deacylation of mischarged Ala-tRNA(Pro). The misacylated Cys-tRNA(Pro) is not edited by ProRS. The sequence is that of Proline--tRNA ligase from Salmonella schwarzengrund (strain CVM19633).